Here is a 695-residue protein sequence, read N- to C-terminus: HIPL1 protein (695 aa).

The first 23 residues, 1–23 (MKLHQFLVFLFLFLSCFALSSWA), serve as a signal peptide directing secretion. N-linked (GlcNAc...) asparagine glycans are attached at residues N37, N67, N107, N113, N128, N151, N175, N190, N208, N337, N429, N511, N527, N641, and N648. S665 carries the GPI-anchor amidated serine lipid modification. Positions 666–695 (SSCYKHINGFHGSLVVLFVSLSLILLGLLN) are cleaved as a propeptide — removed in mature form.

It belongs to the PQQ oxidoreductase GdhB family. Requires pyrroloquinoline quinone as cofactor.

Its subcellular location is the cell membrane. This Arabidopsis thaliana (Mouse-ear cress) protein is HIPL1 protein (HIPL1).